Consider the following 345-residue polypeptide: Inositol 2-dehydrogenase (345 aa).

It belongs to the Gfo/Idh/MocA family. In terms of assembly, homotetramer.

The enzyme catalyses myo-inositol + NAD(+) = scyllo-inosose + NADH + H(+). Functionally, involved in the oxidation of myo-inositol (MI) to 2-keto-myo-inositol (2KMI or 2-inosose). This is Inositol 2-dehydrogenase from Mycolicibacterium smegmatis (strain ATCC 700084 / mc(2)155) (Mycobacterium smegmatis).